A 493-amino-acid polypeptide reads, in one-letter code: Glycerol kinase (493 aa).

T11 provides a ligand contact to ADP. ATP is bound by residues T11, T12, and S13. Position 11 (T11) interacts with sn-glycerol 3-phosphate. R15 is a binding site for ADP. Residues R80, E81, Y132, and D241 each contribute to the sn-glycerol 3-phosphate site. Residues R80, E81, Y132, D241, and Q242 each contribute to the glycerol site. ADP contacts are provided by T263 and G306. Residues T263, G306, Q310, and G408 each coordinate ATP. Residue G408 participates in ADP binding.

This sequence belongs to the FGGY kinase family.

The enzyme catalyses glycerol + ATP = sn-glycerol 3-phosphate + ADP + H(+). It participates in polyol metabolism; glycerol degradation via glycerol kinase pathway; sn-glycerol 3-phosphate from glycerol: step 1/1. Inhibited by fructose 1,6-bisphosphate (FBP). In terms of biological role, key enzyme in the regulation of glycerol uptake and metabolism. Catalyzes the phosphorylation of glycerol to yield sn-glycerol 3-phosphate. This Cereibacter sphaeroides (strain KD131 / KCTC 12085) (Rhodobacter sphaeroides) protein is Glycerol kinase.